A 408-amino-acid chain; its full sequence is Imidazolonepropionase (408 aa).

Residues His-73 and His-75 each coordinate Fe(3+). Zn(2+) contacts are provided by His-73 and His-75. 4-imidazolone-5-propanoate is bound by residues Arg-82, Tyr-145, and His-178. Position 145 (Tyr-145) interacts with N-formimidoyl-L-glutamate. His-243 contributes to the Fe(3+) binding site. Zn(2+) is bound at residue His-243. Gln-246 contacts 4-imidazolone-5-propanoate. Residue Asp-318 participates in Fe(3+) binding. Residue Asp-318 participates in Zn(2+) binding. Positions 320 and 322 each coordinate N-formimidoyl-L-glutamate. Residue Ser-323 participates in 4-imidazolone-5-propanoate binding.

Belongs to the metallo-dependent hydrolases superfamily. HutI family. It depends on Zn(2+) as a cofactor. The cofactor is Fe(3+).

The protein localises to the cytoplasm. The catalysed reaction is 4-imidazolone-5-propanoate + H2O = N-formimidoyl-L-glutamate. It functions in the pathway amino-acid degradation; L-histidine degradation into L-glutamate; N-formimidoyl-L-glutamate from L-histidine: step 3/3. In terms of biological role, catalyzes the hydrolytic cleavage of the carbon-nitrogen bond in imidazolone-5-propanoate to yield N-formimidoyl-L-glutamate. It is the third step in the universal histidine degradation pathway. The sequence is that of Imidazolonepropionase from Shewanella sp. (strain W3-18-1).